Reading from the N-terminus, the 208-residue chain is Small ribosomal subunit protein uS4 (208 aa).

The region spanning 98–158 (SRLDNAVYRL…EKSRNMQVID (61 aa)) is the S4 RNA-binding domain.

The protein belongs to the universal ribosomal protein uS4 family. As to quaternary structure, part of the 30S ribosomal subunit. Contacts protein S5. The interaction surface between S4 and S5 is involved in control of translational fidelity.

In terms of biological role, one of the primary rRNA binding proteins, it binds directly to 16S rRNA where it nucleates assembly of the body of the 30S subunit. Functionally, with S5 and S12 plays an important role in translational accuracy. This is Small ribosomal subunit protein uS4 from Desulfosudis oleivorans (strain DSM 6200 / JCM 39069 / Hxd3) (Desulfococcus oleovorans).